Reading from the N-terminus, the 382-residue chain is ATP phosphoribosyltransferase regulatory subunit (382 aa).

This sequence belongs to the class-II aminoacyl-tRNA synthetase family. HisZ subfamily. Heteromultimer composed of HisG and HisZ subunits.

The protein resides in the cytoplasm. Its pathway is amino-acid biosynthesis; L-histidine biosynthesis; L-histidine from 5-phospho-alpha-D-ribose 1-diphosphate: step 1/9. Functionally, required for the first step of histidine biosynthesis. May allow the feedback regulation of ATP phosphoribosyltransferase activity by histidine. The protein is ATP phosphoribosyltransferase regulatory subunit of Burkholderia vietnamiensis (strain G4 / LMG 22486) (Burkholderia cepacia (strain R1808)).